The sequence spans 633 residues: DNA mismatch repair protein MutL (633 aa).

It belongs to the DNA mismatch repair MutL/HexB family.

This protein is involved in the repair of mismatches in DNA. It is required for dam-dependent methyl-directed DNA mismatch repair. May act as a 'molecular matchmaker', a protein that promotes the formation of a stable complex between two or more DNA-binding proteins in an ATP-dependent manner without itself being part of a final effector complex. The chain is DNA mismatch repair protein MutL from Bacillus pumilus (strain SAFR-032).